We begin with the raw amino-acid sequence, 1265 residues long: Kinesin-like protein Klp98A (1265 aa).

The region spanning 3 to 364 (SLKVAVRVRP…LRYANRAKNI (362 aa)) is the Kinesin motor domain. 100 to 107 (GQTGSGKT) is an ATP binding site. Disordered stretches follow at residues 597-621 (GASP…DPEL), 828-864 (EAES…DVSK), and 884-954 (VSSP…CTPS). 2 coiled-coil regions span residues 619–670 (PELQ…EEMD) and 768–848 (AQFI…LGNK). Polar residues-rich tracts occupy residues 846–857 (GNKSMSTSTSTN), 884–901 (VSSP…SNCS), and 917–927 (SGSSEETSRTC). Residues 933-946 (SGSGSGSVGIGGSG) are compositionally biased toward gly residues. A coiled-coil region spans residues 1035 to 1071 (DLNKAQLDEHIADLQDLQRRYIQMEQEMLQSVQDLEA). The PX domain occupies 1129–1259 (GEHFITIPSF…SFFKKGLFEN (131 aa)).

It belongs to the TRAFAC class myosin-kinesin ATPase superfamily. Kinesin family. As to quaternary structure, interacts with Atg8a and Rab14.

The protein localises to the early endosome. Its function is as follows. Plus end-directed motor protein involved in asymmetric cell division of sensory organ precursor (SOP) cells by playing a role in the asymmetric localization of Sara-expressing endosomes to the pIIa daughter cell but not to the pIIb cell. Targets Sara-expressing endosomes to the central spindle which is symmetrically arranged in early cell division. During late cytokinesis, central spindle asymmetry is generated by enrichment of Patronin on the pIIb side which protects microtubules from depolymerization by Klp10A while unprotected microtubules on the pIIa side are disassembled by Klp10A, leading to the asymmetric delivery of Sara-expressing endosomes to the pIIa daughter cell. Also plays a role in regulation of autophagosome formation, fusion and positioning and is required for normal localization of Rab14. This is Kinesin-like protein Klp98A from Drosophila melanogaster (Fruit fly).